Reading from the N-terminus, the 326-residue chain is Mitochondrial substrate carrier family protein R (326 aa).

Solcar repeat units follow at residues 9-95 (TSPM…LKNN), 101-214 (KSSV…FKRI), and 226-318 (VIGI…LCDY). 6 helical membrane-spanning segments follow: residues 12 to 32 (MVTLLAGGVSGVIAKSTIAPL), 64 to 84 (LAGLWKGNTATILRIFPYSAI), 104 to 124 (VQIFIAGSLGFSCAILLTYPL), 185 to 205 (GIWRGILPTLYGSIPYAGVGY), 226 to 246 (VIGIYKLISGGVAGGLGQTAA), and 290 to 310 (LFKGISINYIKVIPTNGVAFL).

Belongs to the mitochondrial carrier (TC 2.A.29) family.

It localises to the mitochondrion inner membrane. Functionally, mitochondrial solute carriers shuttle metabolites, nucleotides, and cofactors through the mitochondrial inner membrane. May be involved in the accumulation of coenzyme A in the mitochondrial matrix. In Dictyostelium discoideum (Social amoeba), this protein is Mitochondrial substrate carrier family protein R (mcfR).